Reading from the N-terminus, the 382-residue chain is Adaptive-response sensory kinase SasA (382 aa).

Residues 160–382 enclose the Histidine kinase domain; sequence MLAHDLRSPL…CFHFTLPVYR (223 aa). Phosphohistidine; by autocatalysis is present on His-163.

In terms of assembly, homooligomerizes. Interacts with KaiC. Participates in the KaiABC clock complex, whose core is composed of a KaiC homohexamer, 6 KaiB and up to 6 KaiA dimers. SasA and KaiB(fs) compete to bind to KaiC.

It carries out the reaction ATP + protein L-histidine = ADP + protein N-phospho-L-histidine.. Functionally, member of the two-component regulatory system SasA/RpaA involved in genome-wide circadian gene expression. One of several clock output pathways. Participates in the Kai clock protein complex, the main circadian regulator in cyanobacteria, via its interaction with KaiC. KaiC enhances the autophosphorylation activity of SasA, which then transfers its phosphate group to RpaA to activate it. In addition to its output function, recruits fold-shifted KaiB (KaiB(fs)) to KaiC to cooperatively form the KaiB(6):KaiC(6) complex (independent of SasA kinase activity). Required for robustness of the circadian rhythm of gene expression and is involved in clock output, also required for adaptation to light/dark cycles. This chain is Adaptive-response sensory kinase SasA, found in Crocosphaera subtropica (strain ATCC 51142 / BH68) (Cyanothece sp. (strain ATCC 51142)).